The chain runs to 185 residues: GTP-dependent dephospho-CoA kinase (185 aa).

GTP-binding residues include Asp50, Val52, Asp73, Lys75, and Glu128.

It belongs to the GTP-dependent DPCK family.

The enzyme catalyses 3'-dephospho-CoA + GTP = GDP + CoA + H(+). The protein operates within cofactor biosynthesis; coenzyme A biosynthesis. Functionally, catalyzes the GTP-dependent phosphorylation of the 3'-hydroxyl group of dephosphocoenzyme A to form coenzyme A (CoA). This chain is GTP-dependent dephospho-CoA kinase, found in Aeropyrum pernix (strain ATCC 700893 / DSM 11879 / JCM 9820 / NBRC 100138 / K1).